The chain runs to 96 residues: Venom protein 3.1 (96 aa).

Residues 1 to 25 (MKFSLISVFLFAVFLSNENIFQAIA) form the signal peptide. Residues 45 to 84 (EAVMSSSLTNEEESRNWPHRATRNTLEKGQKRSPAARSEI) are disordered.

Belongs to the non-disulfide-bridged peptide (NDBP) superfamily. In terms of tissue distribution, expressed by the venom gland.

The protein localises to the secreted. The sequence is that of Venom protein 3.1 from Lychas mucronatus (Chinese swimming scorpion).